The sequence spans 271 residues: Aquaporin-1 (271 aa).

Residues 1–11 (MASEFKKKLFW) lie on the Cytoplasmic side of the membrane. A helical transmembrane segment spans residues 12 to 29 (RAVVAEFLAMILFVFISI). Residues 30 to 48 (GSALGFNYPVRNNQTAGAA) are Extracellular-facing. Asn42 carries an N-linked (GlcNAc...) asparagine glycan. Residues 49–67 (QDNVKVSLAFGLSIATLAQ) traverse the membrane as a helical segment. The Cytoplasmic segment spans residues 68 to 70 (SVG). An intramembrane segment occupies 71–84 (HISGAHLNPAVTLG). Positions 78-80 (NPA) match the NPA 1 motif. The Cytoplasmic portion of the chain corresponds to 85–92 (LLLSCQIS). A helical transmembrane segment spans residues 93 to 111 (ILRAVMYIIAQCVGAIVAT). Residues 112 to 135 (AILSGITSSLPDNSLGRNELAPGV) are Extracellular-facing. The helical transmembrane segment at 136–155 (NSGQGLGIEIIGTLQLVLCV) threads the bilayer. Residues 156–165 (LATTDRRRRD) are Cytoplasmic-facing. A helical membrane pass occupies residues 166 to 183 (LGGSGPLAIGLSVALGHL). At 184-188 (LAIDY) the chain is on the extracellular side. An intramembrane segment occupies 189–201 (TGCGINPARSFGS). The short motif at 194-196 (NPA) is the NPA 2 element. The Extracellular segment spans residues 202–208 (SVITHNF). A helical membrane pass occupies residues 209 to 226 (KDHWIFWVGPFIGGALAV). The Cytoplasmic segment spans residues 227 to 271 (LIYDFILAPRSSDLTDRVKVWTSGQVEEYELDGDDINSRVEMKPK). Residue Ser249 is modified to Phosphoserine. A Phosphotyrosine modification is found at Tyr255. Ser264 carries the phosphoserine modification.

Belongs to the MIP/aquaporin (TC 1.A.8) family. Homotetramer; each monomer provides an independent water pore. Component of the ankyrin-1 complex in the erythrocyte, composed of ANK1, RHCE, RHAG, SLC4A1, EPB42, GYPA, GYPB and AQP1. Interacts with EPHB2; involved in endolymph production in the inner ear. Identified in a complex with STOM. Interacts (via the N-terminal) with ANK1 (via ANK 1-5 repeats). Interacts (via the C-terminal) with EPB42.

It localises to the cell membrane. The catalysed reaction is H2O(in) = H2O(out). It carries out the reaction nitric oxide(out) = nitric oxide(in). The enzyme catalyses CO2(out) = CO2(in). It catalyses the reaction glycerol(in) = glycerol(out). The catalysed reaction is H2O2(out) = H2O2(in). It carries out the reaction K(+)(in) = K(+)(out). The enzyme catalyses Na(+)(in) = Na(+)(out). Forms a water channel that facilitates the transport of water across cell membranes, playing a crucial role in water homeostasis in various tissues. Could also be permeable to small solutes including hydrogen peroxide, glycerol and gases such as amonnia (NH3), nitric oxide (NO) and carbon dioxide (CO2). Recruited to the ankyrin-1 complex, a multiprotein complex of the erythrocyte membrane, it could be part of a CO2 metabolon, linking facilitated diffusion of CO2 across the membrane, anion exchange of Cl(-)/HCO3(-) and interconversion of dissolved CO2 and carbonic acid in the cytosol. In vitro, it shows non-selective gated cation channel activity and may be permeable to cations like K(+) and Na(+) in vivo. This is Aquaporin-1 from Canis lupus familiaris (Dog).